The chain runs to 603 residues: Podocalyxin-like protein 2 (603 aa).

The N-terminal stretch at 1 to 28 (MARPLRAARLPPPLLLLLAAGASLGAYA) is a signal peptide. The Extracellular segment spans residues 29-499 (VGVDEPGPEG…ATQVRSDYGT (471 aa)). The disordered stretch occupies residues 53-92 (FEPLDSEEPSEAMGLDAGLAPGSGFPSEDSEESRLLQPPQ). S75 carries O-linked (Xyl...) (chondroitin sulfate) serine glycosylation. Y93 carries the sulfotyrosine modification. N101 carries an N-linked (GlcNAc...) asparagine glycan. Residue Y113 is modified to Sulfotyrosine. A disordered region spans residues 124-368 (SMEDPGQAPD…LEGQAAEAHS (245 aa)). Residues 156–187 (QEEEEEEEEEEEEREEEEREKEAEEEEEEEEL) are compositionally biased toward acidic residues. The segment covering 196–216 (ATAQAHAPSPSTSSSTSSQSP) has biased composition (low complexity). 3 stretches are compositionally biased toward polar residues: residues 240-266 (VKPT…QESG), 302-314 (ALPS…TVPP), and 339-349 (DTESTPSSATW). Residue N260 is glycosylated (N-linked (GlcNAc...) asparagine). N394 carries N-linked (GlcNAc...) asparagine glycosylation. A helical membrane pass occupies residues 500–520 (LFVVLVIIGVICFIIIVLGLL). The Cytoplasmic portion of the chain corresponds to 521 to 603 (YNCWQRRMPK…SDVFEEDTHL (83 aa)). Over residues 558 to 570 (DSQSEMQEKQPSL) the composition is skewed to polar residues. Residues 558–603 (DSQSEMQEKQPSLNGGAINGPSSWSALMGSKRDPEDSDVFEEDTHL) are disordered. S569 and S594 each carry phosphoserine. Residues 592 to 603 (EDSDVFEEDTHL) show a composition bias toward acidic residues.

It belongs to the podocalyxin family. As to quaternary structure, homodimer; disulfide-linked. Interacts with SELL, SELE and SELP. Glycosylated; contains chondroitin sulfate. Displays sialylated O-linked oligosaccharides. In terms of processing, sulfation is necessary for interaction with SELL. Sialylated O-linked oligosaccharides are necessary for interaction with SELL, SELE and SELP.

The protein resides in the membrane. Its function is as follows. Acts as a ligand for vascular selectins. Mediates rapid rolling of leukocytes over vascular surfaces through high affinity divalent cation-dependent interactions with E-, P- and L-selectins. The chain is Podocalyxin-like protein 2 (Podxl2) from Mus musculus (Mouse).